The primary structure comprises 433 residues: E3 ubiquitin-protein ligase RGLG5 (433 aa).

The tract at residues M1–K61 is disordered. G2 is lipidated: N-myristoyl glycine. A compositionally biased stretch (low complexity) spans S22–Y39. Positions Q40–K61 are enriched in polar residues. The VWFA domain maps to N93–L313. The disordered stretch occupies residues I340 to N383. Over residues Y347–N383 the composition is skewed to polar residues. The segment at C390–R423 adopts an RING-type zinc-finger fold.

As to quaternary structure, interacts with PP2CA. Post-translationally, N-myristoylated.

Its subcellular location is the cell membrane. The enzyme catalyses S-ubiquitinyl-[E2 ubiquitin-conjugating enzyme]-L-cysteine + [acceptor protein]-L-lysine = [E2 ubiquitin-conjugating enzyme]-L-cysteine + N(6)-ubiquitinyl-[acceptor protein]-L-lysine.. Functionally, together with RGLG1, mediates the ubiquitination and subsequent proteasomal degradation of the target protein PP2CA. Functions as a positive regulator of abscisic acid (ABA) signaling through ABA-dependent degradation of PP2CA, a major inhibitor of ABA signaling. The sequence is that of E3 ubiquitin-protein ligase RGLG5 from Arabidopsis thaliana (Mouse-ear cress).